The sequence spans 188 residues: Elongation factor P (188 aa).

This sequence belongs to the elongation factor P family.

Its subcellular location is the cytoplasm. It participates in protein biosynthesis; polypeptide chain elongation. In terms of biological role, involved in peptide bond synthesis. Stimulates efficient translation and peptide-bond synthesis on native or reconstituted 70S ribosomes in vitro. Probably functions indirectly by altering the affinity of the ribosome for aminoacyl-tRNA, thus increasing their reactivity as acceptors for peptidyl transferase. In Gluconacetobacter diazotrophicus (strain ATCC 49037 / DSM 5601 / CCUG 37298 / CIP 103539 / LMG 7603 / PAl5), this protein is Elongation factor P.